The chain runs to 114 residues: T cell receptor beta variable 19 (114 aa).

The first 21 residues, 1 to 21, serve as a signal peptide directing secretion; that stretch reads MSNQVLCCVVLCLLGANTVDG. An Ig-like domain is found at 22–114; sequence GITQSPKYLF…TAFYLCASSI (93 aa). N-linked (GlcNAc...) asparagine glycosylation occurs at N37. A disulfide bridge links C42 with C110.

Alpha-beta TR is a heterodimer composed of an alpha and beta chain; disulfide-linked. The alpha-beta TR is associated with the transmembrane signaling CD3 coreceptor proteins to form the TR-CD3 (TcR or TCR). The assembly of alpha-beta TR heterodimers with CD3 occurs in the endoplasmic reticulum where a single alpha-beta TR heterodimer associates with one CD3D-CD3E heterodimer, one CD3G-CD3E heterodimer and one CD247 homodimer forming a stable octameric structure. CD3D-CD3E and CD3G-CD3E heterodimers preferentially associate with TR alpha and TR beta chains, respectively. The association of the CD247 homodimer is the last step of TcR assembly in the endoplasmic reticulum and is required for transport to the cell surface. In terms of assembly, (Microbial infection) Interacts with Staphylococcus aureus enterotoxin type B/SEB.

Its subcellular location is the cell membrane. Functionally, v region of the variable domain of T cell receptor (TR) beta chain that participates in the antigen recognition. Alpha-beta T cell receptors are antigen specific receptors which are essential to the immune response and are present on the cell surface of T lymphocytes. Recognize peptide-major histocompatibility (MH) (pMH) complexes that are displayed by antigen presenting cells (APC), a prerequisite for efficient T cell adaptive immunity against pathogens. Binding of alpha-beta TR to pMH complex initiates TR-CD3 clustering on the cell surface and intracellular activation of LCK that phosphorylates the ITAM motifs of CD3G, CD3D, CD3E and CD247 enabling the recruitment of ZAP70. In turn ZAP70 phosphorylates LAT, which recruits numerous signaling molecules to form the LAT signalosome. The LAT signalosome propagates signal branching to three major signaling pathways, the calcium, the mitogen-activated protein kinase (MAPK) kinase and the nuclear factor NF-kappa-B (NF-kB) pathways, leading to the mobilization of transcription factors that are critical for gene expression and essential for T cell growth and differentiation. The T cell repertoire is generated in the thymus, by V-(D)-J rearrangement. This repertoire is then shaped by intrathymic selection events to generate a peripheral T cell pool of self-MH restricted, non-autoaggressive T cells. Post-thymic interaction of alpha-beta TR with the pMH complexes shapes TR structural and functional avidity. In Homo sapiens (Human), this protein is T cell receptor beta variable 19.